Reading from the N-terminus, the 471-residue chain is Type 2 glycosyltransferase (471 aa).

A helical membrane pass occupies residues 4-24 (ILGWFWAFVSAFVLRYLRTIV). N-linked (GlcNAc...) asparagine glycans are attached at residues N29, N88, and N222. Transmembrane regions (helical) follow at residues 305–325 (CLQT…FYSL), 339–359 (MAFT…KLWG), and 368–388 (VIYI…KFWG). N-linked (GlcNAc...) asparagine glycosylation occurs at N458.

It belongs to the GT2 glycosyltransferase family.

The protein localises to the cell membrane. Glycosyltransferase involved in the maintenance of the outermost surface of the fungal cell wall. Likely functions in the synthesis of a currently unknown, potentially minor but widespread, extracellular or outer cell wall polysaccharide which plays a key role in facilitating many interactions between plants and fungi by enabling hyphal growth on solid matrices. The sequence is that of Type 2 glycosyltransferase from Zymoseptoria tritici (strain CBS 115943 / IPO323) (Speckled leaf blotch fungus).